Reading from the N-terminus, the 462-residue chain is Alkaline ceramidase TOD1 (462 aa).

The Cytoplasmic portion of the chain corresponds to 1–18; sequence MGKFITTTLSPPLYARSK. Residues 19 to 39 form a helical membrane-spanning segment; sequence LLCFSLLYLFSTIFLFLYVSL. At 40–462 the chain is on the lumenal side; that stretch reads SRNQCIFRYS…CKNYLTDMWG (423 aa). 3 N-linked (GlcNAc...) asparagine glycosylation sites follow: Asn-121, Asn-132, and Asn-449.

Belongs to the alkaline ceramidase family. Preferentially expressed in pollen grains, pollen tubes and silique guard cells, but barely detectable in roots, stems and leaves.

Its subcellular location is the golgi apparatus membrane. The enzyme catalyses an N-acylsphing-4-enine + H2O = sphing-4-enine + a fatty acid. The protein operates within lipid metabolism. Endoplasmic reticulum ceramidase that catalyzes the hydrolysis of ceramides into sphingosine and free fatty acids at alkaline pH (e.g. pH 9.5). Inactive on phytoceramide. Involved in the regulation of turgor pressure in guard cells and pollen tubes. The protein is Alkaline ceramidase TOD1 of Arabidopsis thaliana (Mouse-ear cress).